A 582-amino-acid chain; its full sequence is Aspartate--tRNA ligase (582 aa).

Residue glutamate 174 participates in L-aspartate binding. The interval 198–201 (QITK) is aspartate. Arginine 220 lines the L-aspartate pocket. Residues 220–222 (RDE) and glutamine 229 each bind ATP. Histidine 443 is an L-aspartate binding site. Position 477 (glutamate 477) interacts with ATP. Position 484 (arginine 484) interacts with L-aspartate. 529–532 (GLDR) serves as a coordination point for ATP.

The protein belongs to the class-II aminoacyl-tRNA synthetase family. Type 1 subfamily. Homodimer.

The protein resides in the cytoplasm. The enzyme catalyses tRNA(Asp) + L-aspartate + ATP = L-aspartyl-tRNA(Asp) + AMP + diphosphate. Its function is as follows. Catalyzes the attachment of L-aspartate to tRNA(Asp) in a two-step reaction: L-aspartate is first activated by ATP to form Asp-AMP and then transferred to the acceptor end of tRNA(Asp). In Streptococcus pyogenes serotype M5 (strain Manfredo), this protein is Aspartate--tRNA ligase.